The chain runs to 61 residues: Small ribosomal subunit protein uS14B (61 aa).

Positions 24, 27, 40, and 43 each coordinate Zn(2+).

This sequence belongs to the universal ribosomal protein uS14 family. Zinc-binding uS14 subfamily. In terms of assembly, part of the 30S ribosomal subunit. Contacts proteins S3 and S10. Zn(2+) serves as cofactor.

Binds 16S rRNA, required for the assembly of 30S particles and may also be responsible for determining the conformation of the 16S rRNA at the A site. In Listeria welshimeri serovar 6b (strain ATCC 35897 / DSM 20650 / CCUG 15529 / CIP 8149 / NCTC 11857 / SLCC 5334 / V8), this protein is Small ribosomal subunit protein uS14B.